We begin with the raw amino-acid sequence, 893 residues long: 104 kDa microneme/rhoptry antigen (893 aa).

A signal peptide spans 1-19; that stretch reads MKFLVLLFNILCLFPILGA. 3 disordered regions span residues 492–666, 681–799, and 818–873; these read SKKK…FDPK, KTKE…PTGK, and KEHM…RKPD. Composition is skewed to basic and acidic residues over residues 525–565 and 573–591; these read SESK…EHKP and KRPE…ESPK. Low complexity predominate over residues 595–606; that stretch reads RPVSPQRPVSPK. Composition is skewed to basic and acidic residues over residues 731–755, 788–797, and 818–830; these read EEVK…DSPT, EAGRILRDPT, and KEHM…KIVV. Residues 831–841 show a composition bias toward acidic residues; the sequence is DDDGTEADDED. The segment covering 851 to 869 has biased composition (basic residues); that stretch reads STVRRRRPRPKKSSKSSKP. Asp873 carries the GPI-anchor amidated aspartate lipid modification. Positions 874-893 are cleaved as a propeptide — removed in mature form; it reads SAFVPSIIFIFLVSLIVGIL.

The protein resides in the cell membrane. The chain is 104 kDa microneme/rhoptry antigen from Theileria annulata.